A 166-amino-acid polypeptide reads, in one-letter code: UPF0260 protein GbCGDNIH1_2046 (166 aa).

Residues 147 to 166 (RFPRPRRPRQEPAGKTADES) form a disordered region. Basic and acidic residues predominate over residues 154-166 (PRQEPAGKTADES).

It belongs to the UPF0260 family.

The protein is UPF0260 protein GbCGDNIH1_2046 of Granulibacter bethesdensis (strain ATCC BAA-1260 / CGDNIH1).